Reading from the N-terminus, the 197-residue chain is Imidazoleglycerol-phosphate dehydratase (197 aa).

It belongs to the imidazoleglycerol-phosphate dehydratase family.

It localises to the cytoplasm. It catalyses the reaction D-erythro-1-(imidazol-4-yl)glycerol 3-phosphate = 3-(imidazol-4-yl)-2-oxopropyl phosphate + H2O. The protein operates within amino-acid biosynthesis; L-histidine biosynthesis; L-histidine from 5-phospho-alpha-D-ribose 1-diphosphate: step 6/9. The chain is Imidazoleglycerol-phosphate dehydratase from Syntrophomonas wolfei subsp. wolfei (strain DSM 2245B / Goettingen).